Here is a 79-residue protein sequence, read N- to C-terminus: Raniseptin-9 (79 aa).

Residues Met1–Cys22 form the signal peptide. A propeptide spanning residues Glu23–Glu49 is cleaved from the precursor. Residues Arg27–Glu46 form a disordered region. Over residues Glu30–Glu44 the composition is skewed to acidic residues.

This sequence belongs to the frog skin active peptide (FSAP) family. Dermaseptin subfamily. As to expression, expressed by the skin glands.

It is found in the secreted. Functionally, has antibacterial activity. In Boana raniceps (Chaco tree frog), this protein is Raniseptin-9.